The primary structure comprises 294 residues: 4-hydroxy-tetrahydrodipicolinate synthase (294 aa).

A pyruvate-binding site is contributed by Thr46. Tyr135 (proton donor/acceptor) is an active-site residue. Residue Lys164 is the Schiff-base intermediate with substrate of the active site. Ile205 is a binding site for pyruvate.

This sequence belongs to the DapA family. As to quaternary structure, homotetramer; dimer of dimers.

It localises to the cytoplasm. It catalyses the reaction L-aspartate 4-semialdehyde + pyruvate = (2S,4S)-4-hydroxy-2,3,4,5-tetrahydrodipicolinate + H2O + H(+). Its pathway is amino-acid biosynthesis; L-lysine biosynthesis via DAP pathway; (S)-tetrahydrodipicolinate from L-aspartate: step 3/4. Catalyzes the condensation of (S)-aspartate-beta-semialdehyde [(S)-ASA] and pyruvate to 4-hydroxy-tetrahydrodipicolinate (HTPA). This chain is 4-hydroxy-tetrahydrodipicolinate synthase, found in Nitratiruptor sp. (strain SB155-2).